A 70-amino-acid polypeptide reads, in one-letter code: Cold shock-like protein CspJ (70 aa).

Residues 7-67 enclose the CSD domain; the sequence is GLVKWFNPEK…GPKGPSAVNV (61 aa).

It localises to the cytoplasm. This Salmonella typhi protein is Cold shock-like protein CspJ (cspJ).